The following is a 116-amino-acid chain: MTDKYENPTSDDYMGVVMGIIMSGGNAKGLAFQAIQQAKAGEFAEAESSLNEASEQLREAHDVQTDLLTRLAQGEKIGWNLYMVHAQDHLMNAITFKDLAVEVVGQEQRLQALENK.

Residues 11 to 109 (DDYMGVVMGI…AVEVVGQEQR (99 aa)) form the PTS EIIA type-3 domain. Catalysis depends on His85, which acts as the Tele-phosphohistidine intermediate. Position 85 is a phosphohistidine; by HPr (His85). Asp88 contacts Mg(2+).

In terms of assembly, homotrimer. Requires Mg(2+) as cofactor.

Functionally, the phosphoenolpyruvate-dependent sugar phosphotransferase system (sugar PTS), a major carbohydrate active transport system, catalyzes the phosphorylation of incoming sugar substrates concomitantly with their translocation across the cell membrane. Involved in cellobiose transport with PtcB and CelB. This system can also transport lactose. This is PTS system cellobiose-specific EIIA component from Lactococcus lactis subsp. lactis (strain IL1403) (Streptococcus lactis).